We begin with the raw amino-acid sequence, 560 residues long: Putative transport protein VIBHAR_02636 (560 aa).

The next 5 helical transmembrane spans lie at 8–28 (LLEQ…LAFG), 37–57 (LGNS…GFSF), 66–86 (FMLF…GIFF), 91–111 (HYFI…YFCS), and 164–184 (VGYA…AKLL). RCK C-terminal domains lie at 205–292 (LGNS…FRNG) and 293–376 (KEVF…KIGF). Transmembrane regions (helical) follow at residues 386–406 (LLAF…TMTF), 409–429 (VSFS…LGFL), 450–470 (LGLM…IFEH), 478–498 (IIGL…LVGA), 505–525 (SALL…MDVV), and 539–559 (AGTY…LIIL).

It belongs to the AAE transporter (TC 2.A.81) family. YbjL subfamily.

Its subcellular location is the cell membrane. This chain is Putative transport protein VIBHAR_02636, found in Vibrio campbellii (strain ATCC BAA-1116).